Here is a 2636-residue protein sequence, read N- to C-terminus: Ankyrin repeat and KH domain-containing protein CBG24701 (2636 aa).

ANK repeat units lie at residues 252-281 (SRIT…DPNA), 286-317 (NCNT…KVDV), 361-390 (NDNS…KNQQ), 435-464 (NLPS…RIDE), 468-500 (HKNT…DVNA), 505-534 (SGDT…DLTT), 536-564 (KITP…TIPQ), 566-595 (QLSR…DLNF), 598-627 (DERT…SVNF), 632-661 (NDAT…DPML), and 665-695 (DGVN…NMDL). 3 disordered regions span residues 994-1030 (PIDA…TTIE), 1172-1191 (KSNR…KKGK), and 1230-1268 (NNTQ…VIDK). Polar residues predominate over residues 1006–1030 (QQTGPKTTSLTTPQPDESNGATTIE). The span at 1233-1245 (QVQQQQGQQQQGQ) shows a compositional bias: low complexity. The segment covering 1249 to 1260 (THSEGDGTERAK) has biased composition (basic and acidic residues). ANK repeat units lie at residues 1273–1302 (TLET…NIEH), 1306–1335 (KGFT…AIEA), 1340–1369 (TKDT…NKEH), 1373–1402 (SDYT…EINS), 1408–1437 (LGIS…DINA), 1447–1476 (YRNT…NVEH), 1480–1509 (TGLT…DPNA), 1515–1546 (TKDT…DIRN), 1548–1577 (KGCS…DTDM), and 1581–1610 (RKMS…QFPN). The stretch at 1638–1696 (RNAKKAQAETAEETANRLLQLIDDEKERDINKKQKIKDKKKQKKEAKKKFQAEQEQLSA) forms a coiled coil. The disordered stretch occupies residues 1669–1857 (KKQKIKDKKK…SSISERQHSW (189 aa)). Residues 1670-1686 (KQKIKDKKKQKKEAKKK) are compositionally biased toward basic residues. A compositionally biased stretch (pro residues) spans 1698–1708 (PSKPEPVVAPE). Acidic residues predominate over residues 1709–1722 (PEPEPETEPVEEPA). Over residues 1811–1829 (DWQKAGKEGKKVRPKREGR) the composition is skewed to basic and acidic residues. Over residues 1832 to 1851 (APSSAGSSQAKHRSNTSSIS) the composition is skewed to polar residues. Residues 1864–1929 (VKAYEFTVPG…DVVSMAVNII (66 aa)) form the KH domain. 7 disordered regions span residues 1980-2182 (SASI…SLPS), 2196-2221 (FKPT…STAS), 2269-2292 (NSTA…SNDF), 2301-2320 (SNQK…NSQL), 2352-2417 (SQSS…TQQQ), 2444-2465 (MHRQ…NPYY), and 2539-2636 (GMMQ…SSRM). Residues 1994 to 2008 (SQCNRSSKSHGNQAT) show a composition bias toward polar residues. The segment covering 2025-2045 (TPPTQTQTKQQPTPSPQVQQP) has biased composition (low complexity). Positions 2057–2083 (SLAQSSVPQATENVTKPTQTPPASVQQ) are enriched in polar residues. 2 stretches are compositionally biased toward low complexity: residues 2099–2119 (QVVQ…QRPQ) and 2139–2148 (QQHMQQIQQQ). Residues 2167-2179 (PGPPVQPQTPPQS) show a composition bias toward pro residues. A compositionally biased stretch (low complexity) spans 2269–2280 (NSTASSLNTATT). Over residues 2281-2292 (KNDTSDWGSNDF) the composition is skewed to polar residues. Low complexity-rich tracts occupy residues 2361 to 2373 (QHQQ…MQDP) and 2391 to 2417 (PQQF…TQQQ). Polar residues-rich tracts occupy residues 2449–2465 (NSSS…NPYY), 2565–2574 (RSASGSSQNR), and 2583–2595 (QQPQ…TQAD). A compositionally biased stretch (low complexity) spans 2599 to 2615 (RLLLQQQQQQRSSQQQQ). Polar residues predominate over residues 2616–2636 (NPTNQGLPQKWSNTWNSSSRM).

It belongs to the mask family.

Its subcellular location is the cytoplasm. The polypeptide is Ankyrin repeat and KH domain-containing protein CBG24701 (Caenorhabditis briggsae).